A 155-amino-acid chain; its full sequence is 6,7-dimethyl-8-ribityllumazine synthase (155 aa).

5-amino-6-(D-ribitylamino)uracil-binding positions include Phe-23, 57–59 (AFE), and 81–83 (AVI). 86–87 (AT) lines the (2S)-2-hydroxy-3-oxobutyl phosphate pocket. His-89 (proton donor) is an active-site residue. Residue Phe-114 coordinates 5-amino-6-(D-ribitylamino)uracil. Residue Arg-128 participates in (2S)-2-hydroxy-3-oxobutyl phosphate binding.

It belongs to the DMRL synthase family.

It catalyses the reaction (2S)-2-hydroxy-3-oxobutyl phosphate + 5-amino-6-(D-ribitylamino)uracil = 6,7-dimethyl-8-(1-D-ribityl)lumazine + phosphate + 2 H2O + H(+). It functions in the pathway cofactor biosynthesis; riboflavin biosynthesis; riboflavin from 2-hydroxy-3-oxobutyl phosphate and 5-amino-6-(D-ribitylamino)uracil: step 1/2. Catalyzes the formation of 6,7-dimethyl-8-ribityllumazine by condensation of 5-amino-6-(D-ribitylamino)uracil with 3,4-dihydroxy-2-butanone 4-phosphate. This is the penultimate step in the biosynthesis of riboflavin. The chain is 6,7-dimethyl-8-ribityllumazine synthase from Pelotomaculum thermopropionicum (strain DSM 13744 / JCM 10971 / SI).